The primary structure comprises 174 residues: UPF0113 protein AF_0058 (174 aa).

One can recognise a PUA domain in the interval 87–161; it reads RNRVWVNERG…KVFVENLVDR (75 aa).

Belongs to the UPF0113 family.

In Archaeoglobus fulgidus (strain ATCC 49558 / DSM 4304 / JCM 9628 / NBRC 100126 / VC-16), this protein is UPF0113 protein AF_0058.